The following is a 201-amino-acid chain: UPF0056 membrane protein PH0760 (201 aa).

6 consecutive transmembrane segments (helical) span residues 8-28 (FMILYTGMFAITNPIGAVPVF), 49-69 (ITVFITLTVFALVGQWIFKFF), 73-93 (IDAFAIAGGILLFRMGMEMLS), 111-131 (VAVIPLAIPLISGPGAITTVM), 140-160 (GIVILTIIAIGLTTYGILYSG), and 181-201 (LILTSMAMQMIINGIKGAFGI).

It belongs to the UPF0056 (MarC) family.

It is found in the cell membrane. The sequence is that of UPF0056 membrane protein PH0760 from Pyrococcus horikoshii (strain ATCC 700860 / DSM 12428 / JCM 9974 / NBRC 100139 / OT-3).